The chain runs to 318 residues: Aspartate carbamoyltransferase catalytic subunit (318 aa).

Arginine 57 and threonine 58 together coordinate carbamoyl phosphate. L-aspartate is bound at residue lysine 85. 3 residues coordinate carbamoyl phosphate: arginine 107, histidine 141, and glutamine 144. L-aspartate contacts are provided by arginine 174 and arginine 228. Glycine 269 and proline 270 together coordinate carbamoyl phosphate.

It belongs to the aspartate/ornithine carbamoyltransferase superfamily. ATCase family. In terms of assembly, heterododecamer (2C3:3R2) of six catalytic PyrB chains organized as two trimers (C3), and six regulatory PyrI chains organized as three dimers (R2).

It catalyses the reaction carbamoyl phosphate + L-aspartate = N-carbamoyl-L-aspartate + phosphate + H(+). The protein operates within pyrimidine metabolism; UMP biosynthesis via de novo pathway; (S)-dihydroorotate from bicarbonate: step 2/3. Catalyzes the condensation of carbamoyl phosphate and aspartate to form carbamoyl aspartate and inorganic phosphate, the committed step in the de novo pyrimidine nucleotide biosynthesis pathway. The chain is Aspartate carbamoyltransferase catalytic subunit from Mycolicibacterium smegmatis (strain ATCC 700084 / mc(2)155) (Mycobacterium smegmatis).